The primary structure comprises 525 residues: GMP synthase [glutamine-hydrolyzing] (525 aa).

The Glutamine amidotransferase type-1 domain maps to 8–206 (PLLILDFGSQ…VVDICKAPTE (199 aa)). Cysteine 85 functions as the Nucleophile in the catalytic mechanism. Catalysis depends on residues histidine 180 and glutamate 182. Residues 207-400 (WTPEHIIDEA…LGLPHDMVYR (194 aa)) form the GMPS ATP-PPase domain. Residue 234-240 (SGGVDSS) coordinates ATP.

In terms of assembly, homodimer.

The enzyme catalyses XMP + L-glutamine + ATP + H2O = GMP + L-glutamate + AMP + diphosphate + 2 H(+). Its pathway is purine metabolism; GMP biosynthesis; GMP from XMP (L-Gln route): step 1/1. In terms of biological role, catalyzes the synthesis of GMP from XMP. This Legionella pneumophila (strain Corby) protein is GMP synthase [glutamine-hydrolyzing].